A 104-amino-acid chain; its full sequence is Urease subunit beta (104 aa).

It belongs to the urease beta subunit family. Heterotrimer of UreA (gamma), UreB (beta) and UreC (alpha) subunits. Three heterotrimers associate to form the active enzyme.

The protein localises to the cytoplasm. The enzyme catalyses urea + 2 H2O + H(+) = hydrogencarbonate + 2 NH4(+). The protein operates within nitrogen metabolism; urea degradation; CO(2) and NH(3) from urea (urease route): step 1/1. In Mycobacterium bovis (strain BCG / Pasteur 1173P2), this protein is Urease subunit beta.